The chain runs to 62 residues: U10-buthitoxin-Hj1a (62 aa).

A signal peptide spans 1 to 22 (MQKIFIILVLFCILKFNVDVEG). 3 cysteine pairs are disulfide-bonded: Cys-28–Cys-46, Cys-33–Cys-59, and Cys-37–Cys-61.

The protein belongs to the short scorpion toxin superfamily. Potassium channel inhibitor family. Alpha-KTx 23 subfamily. Expressed by the venom gland.

It localises to the secreted. In terms of biological role, may block potassium channels. The sequence is that of U10-buthitoxin-Hj1a from Hottentotta judaicus (Black scorpion).